The primary structure comprises 1850 residues: Voltage-dependent L-type calcium channel subunit alpha-1S (1850 aa).

A disordered region spans residues 1 to 23; that stretch reads MEPSSPQDEGLRKKQPKKPVPEI. Residues 1-51 are Cytoplasmic-facing; the sequence is MEPSSPQDEGLRKKQPKKPVPEILPRPPRALFCLTLQNPLRKACISVVEWK. Residues 38-337 form an I repeat; that stretch reads NPLRKACISV…LVLGVLSGEF (300 aa). A helical membrane pass occupies residues 52–70; that stretch reads PFETIILLTIFANCVALAV. Over 71–85 the chain is Extracellular; the sequence is YLPMPEDDNNTLNLG. Residues 86–106 form a helical membrane-spanning segment; it reads LEKLEYFFLIVFSIEAAMKII. Over 107-115 the chain is Cytoplasmic; sequence AYGFLFHQD. A helical membrane pass occupies residues 116–136; the sequence is AYLRSGWNVLDFIIVFLGVFT. Residues 137–160 are Extracellular-facing; it reads AILEQVNIIQTNTAPMSSKGAGLD. The chain crosses the membrane as a helical span at residues 161–179; sequence VKALRAFRVLRPLRLVSGV. The Cytoplasmic portion of the chain corresponds to 180-196; sequence PSLQVVLNSIFKAMLPL. A helical membrane pass occupies residues 197-218; it reads FHIALLVLFMVIIYAIIGLELF. Residues 219–279 lie on the Extracellular side of the membrane; that stretch reads KGKMHKTCYF…HGITHFDNFG (61 aa). 2 disulfides stabilise this stretch: cysteine 226/cysteine 254 and cysteine 245/cysteine 261. An intramembrane region (pore-forming) is located at residues 280–301; that stretch reads FSMLTVYQCISMEGWTDVLYWV. Positions 290–293 match the Selectivity filter of repeat I motif; that stretch reads SMEG. Glutamate 292 serves as a coordination point for Ca(2+). Residues 302–309 lie on the Extracellular side of the membrane; it reads NDAIGNEW. Residues 310–330 form a helical membrane-spanning segment; it reads PWIYFVTLILLGSFFILNLVL. Residues 331–432 are Cytoplasmic-facing; that stretch reads GVLSGEFTKE…WKCHDLVKSK (102 aa). Residues 357–374 are binding to the beta subunit; it reads QQLEEDLRGYMSWITQGE. Phosphoserine occurs at positions 393 and 397. The stretch at 418–664 is one II repeat; the sequence is NRVFRWKCHD…VFLAIAVDNL (247 aa). A helical transmembrane segment spans residues 433–451; that stretch reads VFYWLVILIVALNTLSIAS. Residues 452–462 lie on the Extracellular side of the membrane; that stretch reads EHHNQPLWLTH. The helical transmembrane segment at 463–483 threads the bilayer; that stretch reads LQDVANRVLLALFTIEMLMKM. Over 484 to 494 the chain is Cytoplasmic; sequence YGLGLRQYFMS. A helical membrane pass occupies residues 495 to 514; sequence IFNRFDCFVVCSGILEILLV. The Extracellular segment spans residues 515 to 523; it reads ESGAMTPLG. A helical membrane pass occupies residues 524–542; that stretch reads ISVLRCIRLLRLFKITKYW. Residues 543-561 are Cytoplasmic-facing; it reads TSLSNLVASLLNSIRSIAS. Residues 562 to 581 traverse the membrane as a helical segment; it reads LLLLLFLFMIIFALLGMQLF. The Extracellular portion of the chain corresponds to 582 to 601; the sequence is GGRYDFEDTEVRRSNFDNFP. Positions 602–623 form an intramembrane region, pore-forming; it reads QALISVFQVLTGEDWNSVMYNG. The short motif at 612–615 is the Selectivity filter of repeat II element; it reads TGED. Glutamate 614 lines the Ca(2+) pocket. Residues 624–633 are Extracellular-facing; sequence IMAYGGPSYP. Residues 634 to 653 form a helical membrane-spanning segment; it reads GVLVCIYFIILFVCGNYILL. The Cytoplasmic portion of the chain corresponds to 654 to 799; that stretch reads NVFLAIAVDN…VLCHRIVNAT (146 aa). Disordered regions lie at residues 673-717 and 731-758; these read AQKA…IPTT and EVKDPYPSADFPGDDEEDEPEIPASPRP. Phosphoserine; by PKA is present on serine 687. A compositionally biased stretch (basic and acidic residues) spans 690–711; the sequence is LPDKSEEERSTMTKKLEQKPKG. Residues 742–751 are compositionally biased toward acidic residues; the sequence is PGDDEEDEPE. One copy of the III repeat lies at 786-1068; that stretch reads NKIRVLCHRI…IFVGFVIVTF (283 aa). The chain crosses the membrane as a helical span at residues 800-818; that stretch reads WFTNFILLFILLSSAALAA. Residues 819-830 lie on the Extracellular side of the membrane; sequence EDPIRADSMRNQ. Residues 831–850 form a helical membrane-spanning segment; the sequence is ILEYFDYVFTAVFTVEIVLK. Residues 851–866 are Cytoplasmic-facing; that stretch reads MTTYGAFLHKGSFCRN. The chain crosses the membrane as a helical span at residues 867–885; it reads YFNILDLLVVAVSLISMGL. The Extracellular portion of the chain corresponds to 886–892; the sequence is ESSAISV. A helical membrane pass occupies residues 893 to 911; it reads VKILRVLRVLRPLRAINRA. The Cytoplasmic segment spans residues 912–930; the sequence is KGLKHVVQCVFVAIRTIGN. A helical membrane pass occupies residues 931–950; sequence IVLVTTLLQFMFACIGVQLF. Topologically, residues 951–1000 are extracellular; that stretch reads KGKFYSCNDLSKMTEEECRGYYYIYKDGDPTQIELRPRQWIHNDFHFDNV. Cysteine 957 and cysteine 968 are oxidised to a cystine. Positions 988 to 1077 are dihydropyridine binding; it reads RQWIHNDFHF…FQEQGETEYK (90 aa). The segment at residues 1001 to 1021 is an intramembrane region (pore-forming); it reads LSAMMSLFTVSTFEGWPQLLY. The Selectivity filter of repeat III motif lies at 1012 to 1015; it reads TFEG. Glutamate 1014 is a binding site for Ca(2+). Topologically, residues 1022–1038 are extracellular; sequence KAIDSNEEDTGPVYNNR. A helical membrane pass occupies residues 1039-1060; it reads VEMAIFFIIYIILIAFFMMNIF. Residues 1061–1118 lie on the Cytoplasmic side of the membrane; it reads VGFVIVTFQEQGETEYKNCELDKNQRQCVQYALKARPLRCYIPKNPYQYQVWYVVTSS. An IV repeat occupies 1105 to 1384; sequence NPYQYQVWYV…LFVAVIMDNF (280 aa). Residues 1119 to 1140 form a helical membrane-spanning segment; that stretch reads YFEYLMFALIMLNTICLGMQHY. N-linked (GlcNAc...) asparagine glycosylation occurs at asparagine 1141. At 1141 to 1148 the chain is on the extracellular side; the sequence is NQSEQMNH. Residues 1149–1170 traverse the membrane as a helical segment; the sequence is ISDILNVAFTIIFTLEMILKLI. Topologically, residues 1171–1180 are cytoplasmic; that stretch reads AFKPRGYFGD. A helical membrane pass occupies residues 1181-1200; the sequence is PWNVFDFLIVIGSIIDVILS. The Extracellular segment spans residues 1201 to 1231; it reads EIDTLLASSGGLYCLGGGCGNVDPDESARIS. Residues 1232 to 1250 form a helical membrane-spanning segment; that stretch reads SAFFRLFRVMRLIKLLSRA. Topologically, residues 1251-1268 are cytoplasmic; it reads EGVRTLLWTFIKSFQALP. Residues 1269–1289 form a helical membrane-spanning segment; it reads YVALLIVMLFFIYAVIGMQMF. Over 1290 to 1311 the chain is Extracellular; it reads GKIAMVDGTQINRNNNFQTFPQ. The segment at residues 1312–1330 is an intramembrane region (pore-forming); that stretch reads AVLLLFRCATGEAWQEILL. A Selectivity filter of repeat IV motif is present at residues 1321 to 1324; the sequence is TGEA. Topologically, residues 1331–1356 are extracellular; that stretch reads ACSYGKRCDPESDYAPGEEYACGTNF. The dihydropyridine binding stretch occupies residues 1337-1403; it reads RCDPESDYAP…LGPHHLDEFK (67 aa). An intrachain disulfide couples cysteine 1338 to cysteine 1352. The tract at residues 1349–1391 is phenylalkylamine binding; it reads EYACGTNFAYYYFISFYMLCAFLIINLFVAVIMDNFDYLTRDW. The chain crosses the membrane as a helical span at residues 1357–1381; that stretch reads AYYYFISFYMLCAFLIINLFVAVIM. Residues 1382-1850 lie on the Cytoplasmic side of the membrane; it reads DNFDYLTRDW…PKGGAMPREP (469 aa). The interaction with calmodulin stretch occupies residues 1522–1542; sequence KFYATFLIQEHFRKFMKRQEE. Position 1575 is a phosphoserine; by PKA and CAMK2 (serine 1575). Threonine 1579 is modified (phosphothreonine). Position 1617 is a phosphoserine; by PKA (serine 1617). The segment at 1697-1779 is disordered; it reads PVTREGPFSQ…FEERVPRNSA (83 aa). Residues 1706-1716 show a composition bias toward polar residues; that stretch reads QPCSVSGVNSR. Composition is skewed to basic and acidic residues over residues 1717 to 1726 and 1745 to 1756; these read SHVDKLERQM and QEKHPVHEEGKG.

Belongs to the calcium channel alpha-1 subunit (TC 1.A.1.11) family. CACNA1S subfamily. Component of a calcium channel complex consisting of a pore-forming alpha subunit (CACNA1S) and the ancillary subunits CACNB1 or CACNB2, CACNG1 and CACNA2D1. The channel complex contains alpha, beta, gamma and delta subunits in a 1:1:1:1 ratio, i.e. it contains either CACNB1 or CACNB2. CACNA1S channel activity is modulated by the auxiliary subunits (CACNB1 or CACNB2, CACNG1 and CACNA2D1). Interacts with DYSF and JSRP1. Interacts with RYR1. Interacts with STAC, STAC2 and STAC3 (via their SH3 domains). Interacts with CALM. Post-translationally, the alpha-1S subunit is found in two isoforms in the skeletal muscle: a minor form of 212 kDa containing the complete amino acid sequence, and a major form of 190 kDa derived from the full-length form by post-translational proteolysis close to Phe-1690. Phosphorylated. Phosphorylation by PKA activates the calcium channel. Both the minor and major forms are phosphorylated in vitro by PKA. Phosphorylation at Ser-1575 is involved in beta-adrenergic-mediated regulation of the channel. As to expression, skeletal muscle specific.

It is found in the cell membrane. The protein resides in the sarcolemma. Its subcellular location is the T-tubule. It catalyses the reaction Ca(2+)(in) = Ca(2+)(out). With respect to regulation, channel activity is blocked by dihydropyridines (DHP), phenylalkylamines, and by benzothiazepines. Pore-forming, alpha-1S subunit of the voltage-gated calcium channel that gives rise to L-type calcium currents in skeletal muscle. Calcium channels containing the alpha-1S subunit play an important role in excitation-contraction coupling in skeletal muscle via their interaction with RYR1, which triggers Ca(2+) release from the sarcplasmic reticulum and ultimately results in muscle contraction. Long-lasting (L-type) calcium channels belong to the 'high-voltage activated' (HVA) group. The polypeptide is Voltage-dependent L-type calcium channel subunit alpha-1S (Cacna1s) (Rattus norvegicus (Rat)).